A 258-amino-acid chain; its full sequence is Ubiquinone/menaquinone biosynthesis C-methyltransferase UbiE (258 aa).

Positions 1 to 20 (MSESRTSADGGMETSYGFRE) are disordered. Residues Thr-81, Asp-102, and 130-131 (NA) each bind S-adenosyl-L-methionine.

The protein belongs to the class I-like SAM-binding methyltransferase superfamily. MenG/UbiE family.

The catalysed reaction is a 2-demethylmenaquinol + S-adenosyl-L-methionine = a menaquinol + S-adenosyl-L-homocysteine + H(+). The enzyme catalyses a 2-methoxy-6-(all-trans-polyprenyl)benzene-1,4-diol + S-adenosyl-L-methionine = a 5-methoxy-2-methyl-3-(all-trans-polyprenyl)benzene-1,4-diol + S-adenosyl-L-homocysteine + H(+). It participates in quinol/quinone metabolism; menaquinone biosynthesis; menaquinol from 1,4-dihydroxy-2-naphthoate: step 2/2. The protein operates within cofactor biosynthesis; ubiquinone biosynthesis. Functionally, methyltransferase required for the conversion of demethylmenaquinol (DMKH2) to menaquinol (MKH2) and the conversion of 2-polyprenyl-6-methoxy-1,4-benzoquinol (DDMQH2) to 2-polyprenyl-3-methyl-6-methoxy-1,4-benzoquinol (DMQH2). The chain is Ubiquinone/menaquinone biosynthesis C-methyltransferase UbiE from Rhizobium etli (strain ATCC 51251 / DSM 11541 / JCM 21823 / NBRC 15573 / CFN 42).